Consider the following 1242-residue polypeptide: DNA polymerase catalytic subunit (1242 aa).

3 disordered regions span residues 14–38 (GAVA…RPPQ), 644–665 (LQSA…SSSS), and 1109–1162 (APQG…RKPP). Residues 653–665 (GVSPGSGSNSSSS) show a composition bias toward low complexity. The segment covering 1111–1125 (QGSSDNGDSVTTGVV) has biased composition (polar residues). Basic and acidic residues predominate over residues 1145-1155 (ESNRRGGEPAK).

This sequence belongs to the DNA polymerase type-B family. In terms of assembly, forms a complex with the ssDNA-binding protein UL57, the DNA polymerase processivity factor UL44, and the alkaline exonuclease UL98. Interacts with the putative helicase-primase complex composed of UL70, UL102 and UL105 proteins; these interactions may coordinate leading and lagging strand DNA synthesis at the replication fork.

Its subcellular location is the host nucleus. It catalyses the reaction DNA(n) + a 2'-deoxyribonucleoside 5'-triphosphate = DNA(n+1) + diphosphate. Replicates viral genomic DNA in the late phase of lytic infection, producing long concatemeric DNA. The replication complex is composed of six viral proteins: the DNA polymerase, processivity factor, primase, primase-associated factor, helicase, and ssDNA-binding protein. This is DNA polymerase catalytic subunit (UL54) from Homo sapiens (Human).